Reading from the N-terminus, the 389-residue chain is S-adenosylmethionine synthase (389 aa).

H17 serves as a coordination point for ATP. D19 provides a ligand contact to Mg(2+). A K(+)-binding site is contributed by E45. Positions 58 and 101 each coordinate L-methionine. A flexible loop region spans residues 101 to 111 (QSPDISQGVDG). Residues 170–172 (DSK), 237–238 (RF), D246, 252–253 (RK), A269, and K273 contribute to the ATP site. D246 is an L-methionine binding site. K277 is an L-methionine binding site.

It belongs to the AdoMet synthase family. Homotetramer; dimer of dimers. Requires Mg(2+) as cofactor. K(+) serves as cofactor.

It localises to the cytoplasm. It carries out the reaction L-methionine + ATP + H2O = S-adenosyl-L-methionine + phosphate + diphosphate. Its pathway is amino-acid biosynthesis; S-adenosyl-L-methionine biosynthesis; S-adenosyl-L-methionine from L-methionine: step 1/1. Its function is as follows. Catalyzes the formation of S-adenosylmethionine (AdoMet) from methionine and ATP. The overall synthetic reaction is composed of two sequential steps, AdoMet formation and the subsequent tripolyphosphate hydrolysis which occurs prior to release of AdoMet from the enzyme. The protein is S-adenosylmethionine synthase of Treponema denticola (strain ATCC 35405 / DSM 14222 / CIP 103919 / JCM 8153 / KCTC 15104).